Reading from the N-terminus, the 146-residue chain is VHLTGEEKSAVTGLWGKVNVEDVGGEALGRLLVVYPWTQRFFESFGDLSSPSAVMGNPKVKAHGKKVLSAFSDGLNHLDNLKGTFAKLSELHCDKLHVDPENFRLLGNVLVVVLAHHFGKDFTPQVQSAYQKVVAGVANALAHKYH.

The residue at position 1 (Val1) is an N-acetylvaline. Positions 2-146 (HLTGEEKSAV…VANALAHKYH (145 aa)) constitute a Globin domain. The residue at position 12 (Thr12) is a Phosphothreonine. Ser44 is modified (phosphoserine). Lys59 is subject to N6-acetyllysine. A heme b-binding site is contributed by His63. The residue at position 82 (Lys82) is an N6-acetyllysine. His92 is a binding site for heme b. Cys93 carries the S-nitrosocysteine modification. Lys144 carries the N6-acetyllysine modification.

The protein belongs to the globin family. Heterotetramer of two alpha chains and two beta chains. In terms of tissue distribution, red blood cells.

Functionally, involved in oxygen transport from the lung to the various peripheral tissues. This chain is Hemoglobin subunit beta (HBB), found in Loris tardigradus (Slender loris).